Here is a 459-residue protein sequence, read N- to C-terminus: Serine--tRNA ligase (459 aa).

254–256 contributes to the L-serine binding site; sequence TAE. Residues 285 to 287 and V301 contribute to the ATP site; that span reads RKE. E308 is a binding site for L-serine. 372 to 375 contributes to the ATP binding site; that stretch reads EMVS. Residue T408 coordinates L-serine.

Belongs to the class-II aminoacyl-tRNA synthetase family. Type-1 seryl-tRNA synthetase subfamily. Homodimer. The tRNA molecule binds across the dimer.

The protein localises to the cytoplasm. It catalyses the reaction tRNA(Ser) + L-serine + ATP = L-seryl-tRNA(Ser) + AMP + diphosphate + H(+). It carries out the reaction tRNA(Sec) + L-serine + ATP = L-seryl-tRNA(Sec) + AMP + diphosphate + H(+). The protein operates within aminoacyl-tRNA biosynthesis; selenocysteinyl-tRNA(Sec) biosynthesis; L-seryl-tRNA(Sec) from L-serine and tRNA(Sec): step 1/1. Catalyzes the attachment of serine to tRNA(Ser). Is also able to aminoacylate tRNA(Sec) with serine, to form the misacylated tRNA L-seryl-tRNA(Sec), which will be further converted into selenocysteinyl-tRNA(Sec). This is Serine--tRNA ligase from Desulfurococcus amylolyticus (strain DSM 18924 / JCM 16383 / VKM B-2413 / 1221n) (Desulfurococcus kamchatkensis).